Reading from the N-terminus, the 330-residue chain is Putative [LysW]-L-2-aminoadipate/[LysW]-L-glutamate phosphate reductase (330 aa).

NADP(+) is bound by residues 10 to 13 (SGYI) and 34 to 36 (SRK). C142 is a catalytic residue. N297 serves as a coordination point for NADP(+).

Belongs to the NAGSA dehydrogenase family. Type 1 subfamily. LysY sub-subfamily.

It localises to the cytoplasm. The catalysed reaction is [amino-group carrier protein]-C-terminal-N-(1-carboxy-5-oxopentan-1-yl)-L-glutamine + phosphate + NADP(+) = [amino-group carrier protein]-C-terminal-N-(1-carboxy-5-phosphooxy-5-oxopentan-1-yl)-L-glutamine + NADPH + H(+). It catalyses the reaction [amino-group carrier protein]-C-terminal-gamma-(L-glutamyl-5-semialdehyde)-L-glutamate + phosphate + NADP(+) = [amino-group carrier protein]-C-terminal-gamma-(5-phospho-L-glutamyl)-L-glutamate + NADPH + H(+). It participates in amino-acid biosynthesis; L-lysine biosynthesis via AAA pathway; L-lysine from L-alpha-aminoadipate (Thermus route): step 3/5. It functions in the pathway amino-acid biosynthesis; L-arginine biosynthesis. In terms of biological role, involved in both the arginine and lysine biosynthetic pathways. In Pyrococcus abyssi (strain GE5 / Orsay), this protein is Putative [LysW]-L-2-aminoadipate/[LysW]-L-glutamate phosphate reductase.